The primary structure comprises 218 residues: Adenylate kinase (218 aa).

Residue 10–15 coordinates ATP; sequence GAGKGT. The interval 30 to 59 is NMP; sequence STGDMLRAAVKAGTPLGLEAKAIMDAGGLV. Residues Thr31, Arg36, 57–59, 85–88, and Gln92 contribute to the AMP site; these read GLV and GFPR. Residues 122–159 are LID; it reads GRRVHLASGRTYHVTFNPPKAAGKDDVTGEDLVQRDDD. ATP is bound by residues Arg123 and 132–133; that span reads TY. Residues Arg156 and Arg167 each coordinate AMP. Arg203 is an ATP binding site.

It belongs to the adenylate kinase family. In terms of assembly, monomer.

It localises to the cytoplasm. It catalyses the reaction AMP + ATP = 2 ADP. It functions in the pathway purine metabolism; AMP biosynthesis via salvage pathway; AMP from ADP: step 1/1. In terms of biological role, catalyzes the reversible transfer of the terminal phosphate group between ATP and AMP. Plays an important role in cellular energy homeostasis and in adenine nucleotide metabolism. The chain is Adenylate kinase from Chromobacterium violaceum (strain ATCC 12472 / DSM 30191 / JCM 1249 / CCUG 213 / NBRC 12614 / NCIMB 9131 / NCTC 9757 / MK).